Consider the following 99-residue polypeptide: MKVTDVKIRKINGESRLRGVSSITFENQFVVNDIRIIEGERGIFIAMPSRKTSKGNFRDIAHPINSETRQLIENCIKTKYQDLLDNPPQEEDFSQNSEN.

It belongs to the SpoVG family.

In terms of biological role, could be involved in septation. The protein is Putative septation protein SpoVG of Onion yellows phytoplasma (strain OY-M).